We begin with the raw amino-acid sequence, 245 residues long: 23S rRNA (guanosine-2'-O-)-methyltransferase RlmB (245 aa).

S-adenosyl-L-methionine contacts are provided by glycine 197, isoleucine 217, and leucine 226.

Belongs to the class IV-like SAM-binding methyltransferase superfamily. RNA methyltransferase TrmH family. RlmB subfamily.

It localises to the cytoplasm. The enzyme catalyses guanosine(2251) in 23S rRNA + S-adenosyl-L-methionine = 2'-O-methylguanosine(2251) in 23S rRNA + S-adenosyl-L-homocysteine + H(+). Specifically methylates the ribose of guanosine 2251 in 23S rRNA. In Pasteurella multocida (strain Pm70), this protein is 23S rRNA (guanosine-2'-O-)-methyltransferase RlmB.